Here is a 362-residue protein sequence, read N- to C-terminus: Phosphoserine aminotransferase (362 aa).

Residues Ser-9 and Arg-42 each coordinate L-glutamate. Pyridoxal 5'-phosphate is bound by residues 76–77 (GR), Trp-102, Thr-153, Asp-174, and Gln-197. Residue Lys-198 is modified to N6-(pyridoxal phosphate)lysine. A pyridoxal 5'-phosphate-binding site is contributed by 239–240 (NT).

The protein belongs to the class-V pyridoxal-phosphate-dependent aminotransferase family. SerC subfamily. As to quaternary structure, homodimer. Pyridoxal 5'-phosphate serves as cofactor.

It is found in the cytoplasm. It carries out the reaction O-phospho-L-serine + 2-oxoglutarate = 3-phosphooxypyruvate + L-glutamate. It catalyses the reaction 4-(phosphooxy)-L-threonine + 2-oxoglutarate = (R)-3-hydroxy-2-oxo-4-phosphooxybutanoate + L-glutamate. The protein operates within amino-acid biosynthesis; L-serine biosynthesis; L-serine from 3-phospho-D-glycerate: step 2/3. It participates in cofactor biosynthesis; pyridoxine 5'-phosphate biosynthesis; pyridoxine 5'-phosphate from D-erythrose 4-phosphate: step 3/5. Its function is as follows. Catalyzes the reversible conversion of 3-phosphohydroxypyruvate to phosphoserine and of 3-hydroxy-2-oxo-4-phosphonooxybutanoate to phosphohydroxythreonine. This chain is Phosphoserine aminotransferase, found in Enterobacter sp. (strain 638).